The primary structure comprises 79 residues: Antimicrobial peptide UyCT1 (79 aa).

An N-terminal signal peptide occupies residues 1–23 (MKTQLAFLAITVILMQLFAQTEA). Residue isoleucine 37 is modified to Isoleucine amide. The propeptide occupies 41 to 79 (GLRNVDQIADLFDSGLSDADDLFDSGLSDADAKFMKMFM).

This sequence belongs to the non-disulfide-bridged peptide (NDBP) superfamily. Short antimicrobial peptide (group 4) family. In terms of tissue distribution, expressed by the venom gland.

It is found in the secreted. It localises to the target cell membrane. In terms of biological role, inhibits the growth of Gram-positive (S.aureus, MIC=15 uM) and Gram-negative bacteria (E.coli, MIC=10 uM and P.aeruginosa, MIC=10 uM). It also shows 26% of hemolysis when 15 uM are tested (81% at 50 uM). Inhibits the growth of Gram-negative bacteria (E.coli, MIC=25 uM and P.aeruginosa, MIC=40 uM). It also shows 7% of hemolysis when 50 uM are tested. Does not show activity against the Gram-positive bacteria S.aureus. The sequence is that of Antimicrobial peptide UyCT1 from Urodacus yaschenkoi (Inland robust scorpion).